The chain runs to 624 residues: FAD-dependent monooxygenase apdD (624 aa).

Residues Glu-73 and Asp-359 each contribute to the FAD site.

This sequence belongs to the paxM FAD-dependent monooxygenase family. The cofactor is FAD.

The protein operates within secondary metabolite biosynthesis. Its function is as follows. FAD-dependent monooxygenase; part of the gene cluster that mediates the biosynthesis of aspyridones. The polyketide-amino acid backbone preaspyridone A is first assembled by the PKS-NRPS hybrid apdA. The assembly of preaspyridone A is initiated by loading of malonyl-CoA onto apdA, followed by decarboxylation to yield the acetyl starter unit. The growing polyketide chain then elongates into a tetraketide. The adpA PKS module catalyzes three Claisen condensations, as well as beta-keto processing and methylation. Alpha-methylation step during polyketide synthesis is a prerequisite and a key checkpoint for chain transfer between PKS and NRPS modules. The downstream NRPS module contains the condensation (C), adenylation (A), and thiolation (T) domains and catalyzes the incorporation of tyrosine via the formation of the L-tyrosinyl-thioester and the amide linkage between L-tyrosinyl-thioester and the tetraketide. The bimodular assembly line is terminated with a reductase (R) domain that facilitates formation and release of the tetramic acid product. Because apdA lacks a designated enoylreductase (ER) domain, the required activity is provided the enoyl reductase apdC. ApdC appears to operate with different stereoselectivity in different PKS cycle. Combined with apdC, apdA is proposed to synthesize preaspyridone A via about 20 enzymatic steps. A number of oxidative steps performed successively by the cytochrome P450 monooxygenases apdE and apdB are required for the conversion of preaspyridone A to aspyridone A. The cytochrome P450 monooxygenase apdE is responsible for the oxidative dephenylation of preaspyridone A. Finally, the predicted FAD-dependent monooxygenase apdD and the acyl-CoA dehydrogenase apdG may be involved in the transformation of aspyridone A into aspyridone B. The protein is FAD-dependent monooxygenase apdD of Emericella nidulans (strain FGSC A4 / ATCC 38163 / CBS 112.46 / NRRL 194 / M139) (Aspergillus nidulans).